The sequence spans 237 residues: MIPWLAGRPDFPPVEQALEDPDGLLAAGGELSPAWLLAAYRRGIFPWYTEDQPILWWSPDPRLVLIPAHLRISRSLRRTLRQQRFEVRFDTAFADVIAACAEPREPGGGTWISPEIRQAYLRLHELGYAHSVESWVDGTLVGGLYGIALGRAFFGESMFSRRSDASKVALVHLAAHLQRLGFAAIDCQMTTAHLLSLGAEEMPRARFCAGLANWTNEGPGPGRWSCEKAAEISRNFS.

It belongs to the L/F-transferase family.

Its subcellular location is the cytoplasm. The enzyme catalyses N-terminal L-lysyl-[protein] + L-leucyl-tRNA(Leu) = N-terminal L-leucyl-L-lysyl-[protein] + tRNA(Leu) + H(+). It catalyses the reaction N-terminal L-arginyl-[protein] + L-leucyl-tRNA(Leu) = N-terminal L-leucyl-L-arginyl-[protein] + tRNA(Leu) + H(+). The catalysed reaction is L-phenylalanyl-tRNA(Phe) + an N-terminal L-alpha-aminoacyl-[protein] = an N-terminal L-phenylalanyl-L-alpha-aminoacyl-[protein] + tRNA(Phe). Its function is as follows. Functions in the N-end rule pathway of protein degradation where it conjugates Leu, Phe and, less efficiently, Met from aminoacyl-tRNAs to the N-termini of proteins containing an N-terminal arginine or lysine. This Aromatoleum aromaticum (strain DSM 19018 / LMG 30748 / EbN1) (Azoarcus sp. (strain EbN1)) protein is Leucyl/phenylalanyl-tRNA--protein transferase.